Consider the following 1023-residue polypeptide: 2-oxoglutarate dehydrogenase complex component E1 (1023 aa).

A mitochondrion-targeting transit peptide spans 1–40; sequence MFHLRTCAAKLRPLTASQTVKTFSQNRPAAARTFQQIRCY. Residue lysine 74 is modified to N6-succinyllysine. The residue at position 100 (serine 100) is a Phosphoserine. Ca(2+) is bound by residues histidine 143, aspartate 156, and aspartate 158. Residue arginine 312 coordinates thiamine diphosphate. Lysine 401 carries the post-translational modification N6-acetyllysine. Thiamine diphosphate-binding residues include aspartate 411, asparagine 444, and isoleucine 446. The Mg(2+) site is built by aspartate 411, asparagine 444, and isoleucine 446. Lysine 534 is covalently cross-linked (Glycyl lysine isopeptide (Lys-Gly) (interchain with G-Cter in ubiquitin)). Residue lysine 564 is modified to N6-succinyllysine. Position 676 (glutamine 676) interacts with thiamine diphosphate. Lysine 970 is modified (N6-acetyllysine).

Belongs to the alpha-ketoglutarate dehydrogenase family. As to quaternary structure, homodimer. The 2-oxoglutarate dehydrogenase complex is composed of OGDH (2-oxoglutarate dehydrogenase; E1), DLST (dihydrolipoamide succinyltransferase; E2), DLD (dihydrolipoamide dehydrogenase; E3), and the assembly factor KGD4. It contains multiple copies of the three enzymatic components (E1, E2 and E3). In the nucleus, the 2-oxoglutarate dehydrogenase complex associates with KAT2A. Interacts with ABHD11; this interaction maintains the functional lipoylation of the 2-oxoglutarate dehydrogenase complex. Thiamine diphosphate serves as cofactor. It depends on Mg(2+) as a cofactor.

The protein localises to the mitochondrion. The protein resides in the nucleus. The catalysed reaction is N(6)-[(R)-lipoyl]-L-lysyl-[protein] + 2-oxoglutarate + H(+) = N(6)-[(R)-S(8)-succinyldihydrolipoyl]-L-lysyl-[protein] + CO2. With respect to regulation, calcium ions and ADP stimulate, whereas ATP and NADH reduce catalytic activity. 2-oxoglutarate dehydrogenase (E1o) component of the 2-oxoglutarate dehydrogenase complex (OGDHC). Participates in the first step, rate limiting for the overall conversion of 2-oxoglutarate to succinyl-CoA and CO(2) catalyzed by the whole OGDHC. Catalyzes the irreversible decarboxylation of 2-oxoglutarate (alpha-ketoglutarate) via the thiamine diphosphate (ThDP) cofactor and subsequent transfer of the decarboxylated acyl intermediate on an oxidized dihydrolipoyl group that is covalently amidated to the E2 enzyme (dihydrolipoyllysine-residue succinyltransferase or DLST). Plays a key role in the Krebs (citric acid) cycle, which is a common pathway for oxidation of fuel molecules, including carbohydrates, fatty acids, and amino acids. Can catalyze the decarboxylation of 2-oxoadipate in vitro, but at a much lower rate than 2-oxoglutarate. Mainly active in the mitochondrion. A fraction of the 2-oxoglutarate dehydrogenase complex also localizes in the nucleus and is required for lysine succinylation of histones: associates with KAT2A on chromatin and provides succinyl-CoA to histone succinyltransferase KAT2A. The sequence is that of 2-oxoglutarate dehydrogenase complex component E1 from Homo sapiens (Human).